The primary structure comprises 84 residues: Small ribosomal subunit protein bS20 (84 aa).

The protein belongs to the bacterial ribosomal protein bS20 family.

Functionally, binds directly to 16S ribosomal RNA. The sequence is that of Small ribosomal subunit protein bS20 from Bacteroides fragilis (strain ATCC 25285 / DSM 2151 / CCUG 4856 / JCM 11019 / LMG 10263 / NCTC 9343 / Onslow / VPI 2553 / EN-2).